The sequence spans 576 residues: CTP synthase (576 aa).

One can recognise a Glutamine amidotransferase type-1 domain in the interval 305–559; the sequence is QIALVGKYTH…LGLVAAAANI (255 aa). Active-site for GATase activity residues include Cys-404, His-535, and Glu-537.

It belongs to the CTP synthase family.

It carries out the reaction UTP + L-glutamine + ATP + H2O = CTP + L-glutamate + ADP + phosphate + 2 H(+). The protein operates within pyrimidine metabolism; CTP biosynthesis via de novo pathway; CTP from UDP: step 2/2. Catalyzes the ATP-dependent amination of UTP to CTP with either L-glutamine or ammonia as the source of nitrogen. The polypeptide is CTP synthase (URA7) (Eremothecium gossypii (strain ATCC 10895 / CBS 109.51 / FGSC 9923 / NRRL Y-1056) (Yeast)).